The following is a 152-amino-acid chain: SsrA-binding protein (152 aa).

The disordered stretch occupies residues 130–152; it reads HDKRQDLKQRQDKREMERAMKQR. Residues 132–152 are compositionally biased toward basic and acidic residues; sequence KRQDLKQRQDKREMERAMKQR.

It belongs to the SmpB family.

The protein resides in the cytoplasm. In terms of biological role, required for rescue of stalled ribosomes mediated by trans-translation. Binds to transfer-messenger RNA (tmRNA), required for stable association of tmRNA with ribosomes. tmRNA and SmpB together mimic tRNA shape, replacing the anticodon stem-loop with SmpB. tmRNA is encoded by the ssrA gene; the 2 termini fold to resemble tRNA(Ala) and it encodes a 'tag peptide', a short internal open reading frame. During trans-translation Ala-aminoacylated tmRNA acts like a tRNA, entering the A-site of stalled ribosomes, displacing the stalled mRNA. The ribosome then switches to translate the ORF on the tmRNA; the nascent peptide is terminated with the 'tag peptide' encoded by the tmRNA and targeted for degradation. The ribosome is freed to recommence translation, which seems to be the essential function of trans-translation. The chain is SsrA-binding protein from Thermosynechococcus vestitus (strain NIES-2133 / IAM M-273 / BP-1).